Consider the following 438-residue polypeptide: Histidinol dehydrogenase (438 aa).

The NAD(+) site is built by Y137, Q198, and N221. Substrate contacts are provided by S244, Q266, and H269. Q266 and H269 together coordinate Zn(2+). Catalysis depends on proton acceptor residues E334 and H335. The substrate site is built by H335, D368, E422, and H427. D368 contacts Zn(2+). H427 serves as a coordination point for Zn(2+).

This sequence belongs to the histidinol dehydrogenase family. Zn(2+) serves as cofactor.

It catalyses the reaction L-histidinol + 2 NAD(+) + H2O = L-histidine + 2 NADH + 3 H(+). It participates in amino-acid biosynthesis; L-histidine biosynthesis; L-histidine from 5-phospho-alpha-D-ribose 1-diphosphate: step 9/9. Functionally, catalyzes the sequential NAD-dependent oxidations of L-histidinol to L-histidinaldehyde and then to L-histidine. This chain is Histidinol dehydrogenase, found in Aromatoleum aromaticum (strain DSM 19018 / LMG 30748 / EbN1) (Azoarcus sp. (strain EbN1)).